The chain runs to 200 residues: Shikimate kinase (200 aa).

ATP is bound at residue 41–46 (GVGKSS). Position 45 (serine 45) interacts with Mg(2+). The substrate site is built by aspartate 63, arginine 87, and glycine 109. An ATP-binding site is contributed by arginine 147. Residue arginine 166 participates in substrate binding.

Belongs to the shikimate kinase family. In terms of assembly, monomer. Requires Mg(2+) as cofactor.

Its subcellular location is the cytoplasm. The enzyme catalyses shikimate + ATP = 3-phosphoshikimate + ADP + H(+). It functions in the pathway metabolic intermediate biosynthesis; chorismate biosynthesis; chorismate from D-erythrose 4-phosphate and phosphoenolpyruvate: step 5/7. Catalyzes the specific phosphorylation of the 3-hydroxyl group of shikimic acid using ATP as a cosubstrate. The sequence is that of Shikimate kinase from Caulobacter vibrioides (strain NA1000 / CB15N) (Caulobacter crescentus).